Consider the following 366-residue polypeptide: Chorismate synthase (366 aa).

The NADP(+) site is built by R48 and R54. Residues 125–127 (RSS), 238–239 (NA), G278, 293–297 (KPTSS), and R319 contribute to the FMN site.

It belongs to the chorismate synthase family. In terms of assembly, homotetramer. Requires FMNH2 as cofactor.

It carries out the reaction 5-O-(1-carboxyvinyl)-3-phosphoshikimate = chorismate + phosphate. The protein operates within metabolic intermediate biosynthesis; chorismate biosynthesis; chorismate from D-erythrose 4-phosphate and phosphoenolpyruvate: step 7/7. In terms of biological role, catalyzes the anti-1,4-elimination of the C-3 phosphate and the C-6 proR hydrogen from 5-enolpyruvylshikimate-3-phosphate (EPSP) to yield chorismate, which is the branch point compound that serves as the starting substrate for the three terminal pathways of aromatic amino acid biosynthesis. This reaction introduces a second double bond into the aromatic ring system. The chain is Chorismate synthase from Methylococcus capsulatus (strain ATCC 33009 / NCIMB 11132 / Bath).